Reading from the N-terminus, the 709-residue chain is ATP-binding cassette sub-family F member 3 (709 aa).

An N-acetylalanine modification is found at Ala-2. A Phosphoserine modification is found at Ser-83. The segment covering 129–143 (RLKAKQEKRSEKDTL) has biased composition (basic and acidic residues). The tract at residues 129-171 (RLKAKQEKRSEKDTLKTSNPLVLEEASASQAGSRKESRLESSG) is disordered. A phosphoserine mark is found at Ser-155, Ser-157, and Ser-161. Basic and acidic residues predominate over residues 161-171 (SRKESRLESSG). 2 consecutive ABC transporter domains span residues 178–424 (VRIE…LNQQ) and 492–707 (LQLD…RREG). ATP is bound at residue 210 to 217 (GRNGLGKT). Ser-283 carries the post-translational modification Phosphoserine. 525–532 (GENGAGKS) serves as a coordination point for ATP.

It belongs to the ABC transporter superfamily. ABCF family. EF3 subfamily.

Displays an antiviral effect against flaviviruses such as west Nile virus (WNV) in the presence of OAS1B. The sequence is that of ATP-binding cassette sub-family F member 3 (ABCF3) from Homo sapiens (Human).